Here is a 121-residue protein sequence, read N- to C-terminus: Large ribosomal subunit protein bL12 (121 aa).

Belongs to the bacterial ribosomal protein bL12 family. As to quaternary structure, homodimer. Part of the ribosomal stalk of the 50S ribosomal subunit. Forms a multimeric L10(L12)X complex, where L10 forms an elongated spine to which 2 to 4 L12 dimers bind in a sequential fashion. Binds GTP-bound translation factors.

Forms part of the ribosomal stalk which helps the ribosome interact with GTP-bound translation factors. Is thus essential for accurate translation. This chain is Large ribosomal subunit protein bL12, found in Clostridium perfringens (strain ATCC 13124 / DSM 756 / JCM 1290 / NCIMB 6125 / NCTC 8237 / Type A).